The following is a 1778-amino-acid chain: Protein TIC 214 (1778 aa).

6 helical membrane-spanning segments follow: residues 18-38, 67-87, 90-110, 132-152, 175-195, and 226-246; these read IINSVVVVGLYYGFLTTFSIG, FIAGQLMMFISIYYAPLHLAL, PHTITVLALPYLLFHFFWNNN, VFLNNLIFQLFNHFILPSSML, VGWLIGHILFMKWVGLVLVWI, and IFSILLFITCVYYLGRIPSPI. The segment at 1498–1520 is disordered; sequence GQGELESDNEKKRNPESALSNQE.

Belongs to the TIC214 family. Part of the Tic complex.

It is found in the plastid. Its subcellular location is the chloroplast inner membrane. Involved in protein precursor import into chloroplasts. May be part of an intermediate translocation complex acting as a protein-conducting channel at the inner envelope. The sequence is that of Protein TIC 214 from Arabis hirsuta (Hairy rock-cress).